Here is a 266-residue protein sequence, read N- to C-terminus: Phosphate import ATP-binding protein PstB 2 (266 aa).

Residues 13–252 (LEAQGVNVYY…GPTEEIFQNP (240 aa)) form the ABC transporter domain. Residue 45–52 (GPSGCGKS) coordinates ATP.

This sequence belongs to the ABC transporter superfamily. Phosphate importer (TC 3.A.1.7) family. In terms of assembly, the complex is composed of two ATP-binding proteins (PstB), two transmembrane proteins (PstC and PstA) and a solute-binding protein (PstS).

The protein resides in the cell inner membrane. The catalysed reaction is phosphate(out) + ATP + H2O = ADP + 2 phosphate(in) + H(+). Part of the ABC transporter complex PstSACB involved in phosphate import. Responsible for energy coupling to the transport system. This Synechocystis sp. (strain ATCC 27184 / PCC 6803 / Kazusa) protein is Phosphate import ATP-binding protein PstB 2.